Consider the following 202-residue polypeptide: Superoxide dismutase [Mn] (202 aa).

Histidine 27 contacts Mn(2+). A phosphothreonine mark is found at threonine 34 and threonine 70. Mn(2+) contacts are provided by histidine 82, aspartate 164, and histidine 168.

This sequence belongs to the iron/manganese superoxide dismutase family. Homodimer; under aerobic conditions. Under anaerobic conditions it is a component of the so-called 'green protein' complex (GPC), which consists of at least two components, SodA and a nucleoside diphosphate kinase (NDK). It depends on Mn(2+) as a cofactor.

It localises to the cytoplasm. It catalyses the reaction 2 superoxide + 2 H(+) = H2O2 + O2. Its function is as follows. Destroys superoxide anion radicals which are normally produced within the cells and which are toxic to biological systems. Active only in homodimeric state. The protein is Superoxide dismutase [Mn] (sodA) of Virgibacillus halodenitrificans (Bacillus halodenitrificans).